We begin with the raw amino-acid sequence, 111 residues long: PCNA-associated factor (111 aa).

Residues 1 to 10 (MVRTKANSVP) show a composition bias toward polar residues. The disordered stretch occupies residues 1–111 (MVRTKANSVP…PPDHTDDEKE (111 aa)). At Ser-8 the chain carries Phosphoserine. Residue Lys-15 forms a Glycyl lysine isopeptide (Lys-Gly) (interchain with G-Cter in ubiquitin) linkage. The D-box signature appears at 23 to 34 (RKVLGSSTSAAN). Lys-24 is subject to N6-acetyllysine; alternate. Residue Lys-24 forms a Glycyl lysine isopeptide (Lys-Gly) (interchain with G-Cter in ubiquitin); alternate linkage. Polar residues predominate over residues 27-39 (GSSTSAANSTPLS). Ser-28, Ser-31, and Ser-72 each carry phosphoserine. The PIP-box signature appears at 62-72 (QKGIGEFFSLS). Positions 74-84 (KDSEKENRIPE) are enriched in basic and acidic residues. Positions 78 to 80 (KEN) match the KEN box motif. The Initiation motif signature appears at 85–97 (EAGSSGLGKAKRK).

Interacts (when monoubiquitinated at Lys-15 and Lys-24) with PCNA. Interacts with isoform 2/p33ING1b of ING1. Interacts with BRCA1. Monoubiquitinated at Lys-15 and Lys-24 during normal S phase, promoting its association with PCNA. Also diubiquitinated at these 2 sites. Following DNA damage, monoubiquitin chains at Lys-15 and Lys-24 are probably extended, leading to disrupt the interaction with PCNA. Polyubiquitinated by the APC/C complex at the mitotic exit, leading to its degradation by the proteasome.

Its subcellular location is the nucleus. The protein resides in the cytoplasm. It is found in the perinuclear region. Functionally, PCNA-binding protein that acts as a regulator of DNA repair during DNA replication. Following DNA damage, the interaction with PCNA is disrupted, facilitating the interaction between monoubiquitinated PCNA and the translesion DNA synthesis DNA polymerase eta (POLH) at stalled replisomes, facilitating the bypass of replication-fork-blocking lesions. Also acts as a regulator of centrosome number. This Bos taurus (Bovine) protein is PCNA-associated factor.